The chain runs to 344 residues: Dihydroorotase (344 aa).

Residues histidine 13 and histidine 15 each coordinate Zn(2+). Residues 15-17 (HLR) and asparagine 41 each bind substrate. The Zn(2+) site is built by lysine 98, histidine 135, and histidine 173. Lysine 98 carries the N6-carboxylysine modification. Residue histidine 135 coordinates substrate. Leucine 218 is a substrate binding site. Aspartate 247 provides a ligand contact to Zn(2+). Residue aspartate 247 is part of the active site. Substrate is bound by residues histidine 251 and alanine 263.

It belongs to the metallo-dependent hydrolases superfamily. DHOase family. Class II DHOase subfamily. Homodimer. Zn(2+) serves as cofactor.

The catalysed reaction is (S)-dihydroorotate + H2O = N-carbamoyl-L-aspartate + H(+). Its pathway is pyrimidine metabolism; UMP biosynthesis via de novo pathway; (S)-dihydroorotate from bicarbonate: step 3/3. Its function is as follows. Catalyzes the reversible cyclization of carbamoyl aspartate to dihydroorotate. This is Dihydroorotase from Neisseria gonorrhoeae (strain ATCC 700825 / FA 1090).